The chain runs to 133 residues: MQRVTITLDDDLLETLDSLSQRRGYNNRSEAIRDILRSALAQEATQQHGTQGFAVLSYVYEHEKRDLASRIVSTQHHHHELSVATLHVHINHDDCLEIAVLKGDMGDVQHFADDVIAQRGVRHGHLQCLPKED.

Ni(2+)-binding residues include histidine 76, histidine 87, histidine 89, and cysteine 95.

Belongs to the transcriptional regulatory CopG/NikR family. In terms of assembly, homotetramer. Ni(2+) is required as a cofactor.

Its function is as follows. Transcriptional repressor of the nikABCDE operon. Is active in the presence of excessive concentrations of intracellular nickel. The protein is Nickel-responsive regulator of Escherichia coli (strain SE11).